Here is an 81-residue protein sequence, read N- to C-terminus: MMFPLARNALSSLKIRSILQSMARQSHVKHSPDFHDKYGNAVLASGTAFCVVAWVFTATQIGIEWNLSPVGRVTPKEWKHQ.

The N-terminal 25 residues, methionine 1–glutamine 25, are a transit peptide targeting the mitochondrion. The Mitochondrial matrix segment spans residues serine 26 to aspartate 33. Residues phenylalanine 34 to glutamine 60 traverse the membrane as a helical segment. Topologically, residues isoleucine 61–glutamine 81 are mitochondrial intermembrane.

The protein belongs to the cytochrome c oxidase VIIb family. As to quaternary structure, component of the cytochrome c oxidase (complex IV, CIV), a multisubunit enzyme composed of 14 subunits. The complex is composed of a catalytic core of 3 subunits MT-CO1, MT-CO2 and MT-CO3, encoded in the mitochondrial DNA, and 11 supernumerary subunits COX4I, COX5A, COX5B, COX6A, COX6B, COX6C, COX7A, COX7B, COX7C, COX8 and NDUFA4, which are encoded in the nuclear genome. The complex exists as a monomer or a dimer and forms supercomplexes (SCs) in the inner mitochondrial membrane with NADH-ubiquinone oxidoreductase (complex I, CI) and ubiquinol-cytochrome c oxidoreductase (cytochrome b-c1 complex, complex III, CIII), resulting in different assemblies (supercomplex SCI(1)III(2)IV(1) and megacomplex MCI(2)III(2)IV(2)).

The protein resides in the mitochondrion inner membrane. It functions in the pathway energy metabolism; oxidative phosphorylation. In terms of biological role, component of the cytochrome c oxidase, the last enzyme in the mitochondrial electron transport chain which drives oxidative phosphorylation. The respiratory chain contains 3 multisubunit complexes succinate dehydrogenase (complex II, CII), ubiquinol-cytochrome c oxidoreductase (cytochrome b-c1 complex, complex III, CIII) and cytochrome c oxidase (complex IV, CIV), that cooperate to transfer electrons derived from NADH and succinate to molecular oxygen, creating an electrochemical gradient over the inner membrane that drives transmembrane transport and the ATP synthase. Cytochrome c oxidase is the component of the respiratory chain that catalyzes the reduction of oxygen to water. Electrons originating from reduced cytochrome c in the intermembrane space (IMS) are transferred via the dinuclear copper A center (CU(A)) of subunit 2 and heme A of subunit 1 to the active site in subunit 1, a binuclear center (BNC) formed by heme A3 and copper B (CU(B)). The BNC reduces molecular oxygen to 2 water molecules using 4 electrons from cytochrome c in the IMS and 4 protons from the mitochondrial matrix. The sequence is that of Cytochrome c oxidase subunit 7B2, mitochondrial (COX7B2) from Macaca fascicularis (Crab-eating macaque).